Reading from the N-terminus, the 338-residue chain is uncharacterized protein (338 aa).

Residues histidine 111–aspartate 334 enclose the Radical SAM core domain. [4Fe-4S] cluster is bound by residues cysteine 129, cysteine 133, and cysteine 136.

[4Fe-4S] cluster is required as a cofactor.

This is an uncharacterized protein from Methanocaldococcus jannaschii (strain ATCC 43067 / DSM 2661 / JAL-1 / JCM 10045 / NBRC 100440) (Methanococcus jannaschii).